A 506-amino-acid polypeptide reads, in one-letter code: Glutamate--tRNA ligase (506 aa).

Positions 14–24 (PSPTGYLHIGG) match the 'HIGH' region motif. Residues 261–265 (KLSKR) carry the 'KMSKS' region motif. Residue Lys-264 participates in ATP binding.

It belongs to the class-I aminoacyl-tRNA synthetase family. Glutamate--tRNA ligase type 1 subfamily. Monomer.

It is found in the cytoplasm. The catalysed reaction is tRNA(Glu) + L-glutamate + ATP = L-glutamyl-tRNA(Glu) + AMP + diphosphate. Functionally, catalyzes the attachment of glutamate to tRNA(Glu) in a two-step reaction: glutamate is first activated by ATP to form Glu-AMP and then transferred to the acceptor end of tRNA(Glu). The protein is Glutamate--tRNA ligase of Roseiflexus sp. (strain RS-1).